Reading from the N-terminus, the 339-residue chain is Nicotinate-nucleotide--dimethylbenzimidazole phosphoribosyltransferase (339 aa).

Glu-306 acts as the Proton acceptor in catalysis.

The protein belongs to the CobT family.

The enzyme catalyses 5,6-dimethylbenzimidazole + nicotinate beta-D-ribonucleotide = alpha-ribazole 5'-phosphate + nicotinate + H(+). Its pathway is nucleoside biosynthesis; alpha-ribazole biosynthesis; alpha-ribazole from 5,6-dimethylbenzimidazole: step 1/2. Catalyzes the synthesis of alpha-ribazole-5'-phosphate from nicotinate mononucleotide (NAMN) and 5,6-dimethylbenzimidazole (DMB). The chain is Nicotinate-nucleotide--dimethylbenzimidazole phosphoribosyltransferase from Brucella canis (strain ATCC 23365 / NCTC 10854 / RM-666).